The sequence spans 509 residues: Type II methyltransferase M.BsoBI (509 aa).

The protein belongs to the N(4)/N(6)-methyltransferase family. N(4) subfamily.

The catalysed reaction is a 2'-deoxycytidine in DNA + S-adenosyl-L-methionine = an N(4)-methyl-2'-deoxycytidine in DNA + S-adenosyl-L-homocysteine + H(+). An alpha subtype methylase that recognizes the double-stranded sequence 5'-CYCGRG-3', methylates C-1 on both strands, and protects the DNA from cleavage by the BsoBI endonuclease. This is Type II methyltransferase M.BsoBI from Geobacillus stearothermophilus (Bacillus stearothermophilus).